Consider the following 892-residue polypeptide: MLPVEVPLSQLGPPVLLLQLLLPPTSAFFPNIWSLLAAPGSITHQDLTEEAALNVTLELFLEQPPPGRPHLHLEDYRGRTLLADDIFAAYFGSGFSSRRFRAALGEVSRANAAQDFLPASKSNPDLHFDAERLVQGRTRLEGALRETLVAARALEYTLARQRLGAALHALQDFYSHSNWVELGERQPHPHLLWPRRELWSLAQVGDPTCSDCEGLSCPGNMMNLTMLTSGYFGTNPPKPPGKCSHGGRFDQSSSQPPRGGINKDSTSPSFSPHHRLHLQAAEVALLASIEALSLLRSRLGTRGFSRLLDITPASSLSFVLDTTGSMGEEINAAKIQARRIVEQRQGSPMEPVSYILVPFHDPGFGPVFTTSDPDSFWQKLTEIHALGGGDEPEMCLSALELALLHTPPLSDIFVFTDASPKDAFLTNRVESLTRERRCRVTFLVTEDPSRAQGRGRREALSPSRFEPYEAIALASGGEVIFTKDQHIRDVAAVVGESMAGLVTLPLEPPIFTPGEPCVFAVDSLLSKVTVRMHGDISGFWIKSPAGLSQGPEEGIGPLGHTRRFGQFWTVTMTDPPQTGSWEIQVAAEGTPRVRVQAQTSLDFLFHFGISAEDGPHPGLYPLTQPVAGLQTQLLVEVTGLVSRQKLGDGQPQFSHAVLRRVSEGTHLGRVSLEPVGPPERGLLAASLPPTLLSVSVPFSLELVGQDVGGQCLRRSAPQPCSVAPVLLELSGPPDFLTPGSKAPLSLRVASFSGPQDVDLRSSVNPSFSLTSNLSRARLGLNESAWGCLWLEVPDSAAPDTVVTVTVTVTAVGQGASQVPPTHAFLQLLVLAQSSKDQLEDPTHSAAPVLPPTTPALLPSTLVTRGRAGRGTTGKTWWGTVGGVLFLLGCTSW.

An N-terminal signal peptide occupies residues 1-27 (MLPVEVPLSQLGPPVLLLQLLLPPTSA). Residue Asn54 is glycosylated (N-linked (GlcNAc...) asparagine). Residues 231–272 (YFGTNPPKPPGKCSHGGRFDQSSSQPPRGGINKDSTSPSFSP) are disordered. Positions 313 to 495 (ASSLSFVLDT…HIRDVAAVVG (183 aa)) constitute a VWFA domain.

Its subcellular location is the secreted. This is von Willebrand factor A domain-containing protein 7 (Vwa7) from Rattus norvegicus (Rat).